We begin with the raw amino-acid sequence, 274 residues long: Oxidized low-density lipoprotein receptor 1 (274 aa).

The segment covering 1–16 (MAVDDLKVKPMKDQPD) has biased composition (basic and acidic residues). The disordered stretch occupies residues 1–25 (MAVDDLKVKPMKDQPDQKSNGKKPK). Over 1 to 31 (MAVDDLKVKPMKDQPDQKSNGKKPKGLRFLS) the chain is Cytoplasmic. The helical; Signal-anchor for type II membrane protein transmembrane segment at 32 to 54 (SPWWCPAAVALGVLCLGSLMTII) threads the bilayer. Residues C36 and C46 are each lipidated (S-palmitoyl cysteine). Residues 55–150 (MLGMQLLQVS…SGPCPEDWLW (96 aa)) are neck. Residues 55 to 274 (MLGMQLLQVS…QKKANLLRSE (220 aa)) lie on the Extracellular side of the membrane. N-linked (GlcNAc...) asparagine glycosylation is found at N73 and N139. A coiled-coil region spans residues 84-139 (QVLAQQQAEAASQESQRELKEMIETLAKRLDEKSKKQMELNHQYLNLQEALKRMDN). 3 disulfides stabilise this stretch: C144–C155, C172–C264, and C243–C256. One can recognise a C-type lectin domain in the interval 151 to 265 (HGKNCYLFSS…CILVAYSICQ (115 aa)).

In terms of assembly, homodimer; disulfide-linked. May form a hexamer composed of 3 homodimers. Interacts with HSP70. Post-translationally, N-glycosylated.

The protein localises to the cell membrane. The protein resides in the membrane raft. Its subcellular location is the secreted. Its function is as follows. Receptor that mediates the recognition, internalization and degradation of oxidatively modified low density lipoprotein (oxLDL) by vascular endothelial cells. OxLDL is a marker of atherosclerosis that induces vascular endothelial cell activation and dysfunction, resulting in pro-inflammatory responses, pro-oxidative conditions and apoptosis. Its association with oxLDL induces the activation of NF-kappa-B through an increased production of intracellular reactive oxygen and a variety of pro-atherogenic cellular responses including a reduction of nitric oxide (NO) release, monocyte adhesion and apoptosis. In addition to binding oxLDL, it acts as a receptor for the HSP70 protein involved in antigen cross-presentation to naive T-cells in dendritic cells, thereby participating in cell-mediated antigen cross-presentation. Also involved in inflammatory process, by acting as a leukocyte-adhesion molecule at the vascular interface in endotoxin-induced inflammation. Also acts as a receptor for advanced glycation end (AGE) products, activated platelets, monocytes, apoptotic cells and both Gram-negative and Gram-positive bacteria. The polypeptide is Oxidized low-density lipoprotein receptor 1 (OLR1) (Oryctolagus cuniculus (Rabbit)).